Consider the following 504-residue polypeptide: L-carnitine/gamma-butyrobetaine antiporter (504 aa).

Transmembrane regions (helical) follow at residues Met10–Val30, Trp51–Phe71, Ile92–Ile112, Gly143–Val163, Phe195–Val215, Leu231–Leu251, Ser263–Met283, Trp316–Ala336, Leu347–Gly367, Trp398–Ala418, Leu446–Leu466, and Ala475–Ile495.

This sequence belongs to the BCCT transporter (TC 2.A.15) family. CaiT subfamily. In terms of assembly, homotrimer.

The protein localises to the cell inner membrane. The enzyme catalyses 4-(trimethylamino)butanoate(in) + (R)-carnitine(out) = 4-(trimethylamino)butanoate(out) + (R)-carnitine(in). It functions in the pathway amine and polyamine metabolism; carnitine metabolism. Functionally, catalyzes the exchange of L-carnitine for gamma-butyrobetaine. This Shigella dysenteriae serotype 1 (strain Sd197) protein is L-carnitine/gamma-butyrobetaine antiporter.